Consider the following 61-residue polypeptide: Small ribosomal subunit protein uS14 (61 aa).

The Zn(2+) site is built by C24, C27, C40, and C43.

It belongs to the universal ribosomal protein uS14 family. Zinc-binding uS14 subfamily. In terms of assembly, part of the 30S ribosomal subunit. Contacts proteins S3 and S10. It depends on Zn(2+) as a cofactor.

Binds 16S rRNA, required for the assembly of 30S particles and may also be responsible for determining the conformation of the 16S rRNA at the A site. In Borrelia hermsii (strain HS1 / DAH), this protein is Small ribosomal subunit protein uS14.